Reading from the N-terminus, the 428-residue chain is MCDVVLGSQWGDEGKGKLVDLLCDDIDVCARCQGGNNAGHTIVVGKVKYDFHMLPSGLVNPKCQNLVGSGVVIHVPSFFAELENLEAKGLDCRDRLFVSSRAHLVFDFHQRTDKLKEAELSTNKKSIGTTGKGIGPTYSTKASRSGIRVHHLVNPDPEAWEDFKTRYMRLVESRQKRYGEFEYDPKEELARFEKYREALRPFVVDSVNFMHEAIAANKKILVEGANALMLDIDFGTYPYVTSSSTGIGGVLTGLGIPPRTIRNVYGVVKAYTTRVGEGPFPTEQLNKVGETLQDVGAEYGVTTGRKRRCGWLDLVVLKYSNSINGYTSLNITKLDVLDKFKEIEVGVAYKLNGKELPSFPEDLIDLAKVEVVYKKFPGWEQDITGIKKYDDLPENAKNYLKFIEDYLQVPIQWVGTGPARDSMLEKKI.

GTP is bound by residues 11 to 17 (GDEGKGK) and 39 to 41 (GHT). The active-site Proton acceptor is Asp-12. Mg(2+)-binding residues include Asp-12 and Gly-39. Residues 12 to 15 (DEGK), 37 to 40 (NAGH), Thr-130, Arg-144, Asn-226, Thr-241, and Arg-305 contribute to the IMP site. His-40 (proton donor) is an active-site residue. 301 to 307 (VTTGRKR) lines the substrate pocket. Residues Arg-307, 333 to 335 (KLD), and 415 to 417 (GTG) contribute to the GTP site.

It belongs to the adenylosuccinate synthetase family. In terms of assembly, homodimer. Requires Mg(2+) as cofactor.

It is found in the cytoplasm. The enzyme catalyses IMP + L-aspartate + GTP = N(6)-(1,2-dicarboxyethyl)-AMP + GDP + phosphate + 2 H(+). Its pathway is purine metabolism; AMP biosynthesis via de novo pathway; AMP from IMP: step 1/2. Plays an important role in the de novo pathway and in the salvage pathway of purine nucleotide biosynthesis. Catalyzes the first committed step in the biosynthesis of AMP from IMP. In Candida dubliniensis (strain CD36 / ATCC MYA-646 / CBS 7987 / NCPF 3949 / NRRL Y-17841) (Yeast), this protein is Adenylosuccinate synthetase.